The sequence spans 176 residues: MLRFLNQCSQGRGAWLLMAFTALALELTALWFQHVMLLKPCVLCIYERCALFGVLGAALIGAIAPKTPLRYVAMVIWLYSAFRGVQLTYEHTMLQLYPSPFATCDFMARFPEWLPLDKWVPQVFVASGDCAERQWEFLGLEMPQWLLGIFIAYLIVAVLVVISQPFKAKKRDLFGR.

The Cytoplasmic segment spans residues 1-14; it reads MLRFLNQCSQGRGA. A helical membrane pass occupies residues 15–31; the sequence is WLLMAFTALALELTALW. The Periplasmic portion of the chain corresponds to 32–49; sequence FQHVMLLKPCVLCIYERC. Residues Cys-41 and Cys-44 are joined by a disulfide bond. The helical transmembrane segment at 50–65 threads the bilayer; that stretch reads ALFGVLGAALIGAIAP. At 66-71 the chain is on the cytoplasmic side; the sequence is KTPLRY. A helical membrane pass occupies residues 72 to 89; sequence VAMVIWLYSAFRGVQLTY. Topologically, residues 90–144 are periplasmic; that stretch reads EHTMLQLYPSPFATCDFMARFPEWLPLDKWVPQVFVASGDCAERQWEFLGLEMPQ. Cysteines 104 and 130 form a disulfide. The chain crosses the membrane as a helical span at residues 145–163; that stretch reads WLLGIFIAYLIVAVLVVIS. Over 164-176 the chain is Cytoplasmic; it reads QPFKAKKRDLFGR.

This sequence belongs to the DsbB family.

The protein resides in the cell inner membrane. In terms of biological role, required for disulfide bond formation in some periplasmic proteins. Acts by oxidizing the DsbA protein. The protein is Disulfide bond formation protein B of Escherichia coli O1:K1 / APEC.